Consider the following 188-residue polypeptide: Pyridoxal 5'-phosphate synthase subunit PdxT (188 aa).

Gly46–Ser48 is an L-glutamine binding site. The active-site Nucleophile is the Cys78. L-glutamine-binding positions include Arg105 and Ile134–Arg135. Residues His170 and Glu172 each act as charge relay system in the active site.

It belongs to the glutaminase PdxT/SNO family. In the presence of PdxS, forms a dodecamer of heterodimers. Only shows activity in the heterodimer.

The enzyme catalyses aldehydo-D-ribose 5-phosphate + D-glyceraldehyde 3-phosphate + L-glutamine = pyridoxal 5'-phosphate + L-glutamate + phosphate + 3 H2O + H(+). The catalysed reaction is L-glutamine + H2O = L-glutamate + NH4(+). The protein operates within cofactor biosynthesis; pyridoxal 5'-phosphate biosynthesis. Its function is as follows. Catalyzes the hydrolysis of glutamine to glutamate and ammonia as part of the biosynthesis of pyridoxal 5'-phosphate. The resulting ammonia molecule is channeled to the active site of PdxS. This is Pyridoxal 5'-phosphate synthase subunit PdxT from Moorella thermoacetica (strain ATCC 39073 / JCM 9320).